The following is a 797-amino-acid chain: Interphotoreceptor matrix proteoglycan 1 (797 aa).

Residues 1 to 20 (MYLETRRAIFVFWIFLQVQG) form the signal peptide. Residues Asn-42, Asn-143, Asn-191, and Asn-215 are each glycosylated (N-linked (GlcNAc...) asparagine). In terms of domain architecture, SEA 1 spans 232–354 (EEQRVELSVS…QPEIYLTATD (123 aa)). 4 O-linked (GalNAc...) threonine glycosylation sites follow: Thr-403, Thr-421, Thr-432, and Thr-442. The SEA 2 domain maps to 571–684 (RELVVFFSLR…YSLNIEPADQ (114 aa)). N-linked (GlcNAc...) asparagine glycans are attached at residues Asn-592 and Asn-616. The Heparin- and hyaluronan-binding motif lies at 621 to 629 (KQLEILNFR). N-linked (GlcNAc...) asparagine glycans are attached at residues Asn-630 and Asn-648.

The N-terminus is blocked. Post-translationally, highly glycosylated (N- and O-linked carbohydrates and sialic acid). As to expression, expressed in the retina (at protein level). In the retina, specifically expressed by cone and rod photoreceptor cells. Localizes to cone and rod photoreceptor cells surrounding the interphotoreceptor matrix of the retina.

The protein resides in the cell projection. The protein localises to the cilium. It is found in the photoreceptor outer segment. Its subcellular location is the secreted. It localises to the extracellular space. The protein resides in the extracellular matrix. The protein localises to the interphotoreceptor matrix. It is found in the photoreceptor inner segment. Functionally, chondroitin sulfate-, heparin- and hyaluronan-binding protein. May serve to form a basic macromolecular scaffold comprising the insoluble interphotoreceptor matrix. This Homo sapiens (Human) protein is Interphotoreceptor matrix proteoglycan 1.